A 991-amino-acid chain; its full sequence is Ribonuclease TUDOR 1 (991 aa).

At A2 the chain carries N-acetylalanine. 4 TNase-like domains span residues 8–151 (QWLK…RWSK), 186–364 (KPME…MWAN), 378–557 (QNFT…IHSA), and 587–714 (RRIP…IWEN). The disordered stretch occupies residues 227 to 250 (RTTNGSVVETVPDEPNGDVSAESR). The 66-residue stretch at 782–847 (NPKRGDIVLA…RPIDPSVSAA (66 aa)) folds into the Tudor domain. Position 970 is a phosphotyrosine (Y970). The interval 971–991 (GDIESDDEDTGPARKPAGGRR) is disordered. The residue at position 975 (S975) is a Phosphoserine. T980 carries the phosphothreonine modification.

Expressed in seeds, leaves, flowers, roots and siliques (at protein level). Accumulates in the cap and elongation zone of the root apices (at protein level).

The protein resides in the cytoplasm. Its subcellular location is the cytoplasmic granule. The protein localises to the perinuclear region. It localises to the endoplasmic reticulum. Repressed by the specific inhibitor 3',5'-deoxythymidine bisphosphate (pdTp); this RNase activity inhibition impairs subcellular relocation upon abiotic stress and leads to reduced stress resistance. Cytoprotective ribonuclease (RNase) required for resistance to abiotic stresses, acting as a positive regulator of mRNA decapping during stress. Essential for the integrity and function of cytoplasmic messenger ribonucleoprotein (mRNP) complexes called stress granules (SGs) and processing bodies (PBs), sites of post-transcriptional gene regulation during stress (e.g. salt and heat). Involved in gibberellic acid (GA) biosynthesis. Essential for stress tolerance, probably by regulating mRNAs entering the secretory pathway. Component of stress granules (SGs) that regulates growth under salt stress by modulating levels of GA20OX3 mRNA. Binds GA20OX3 mRNA. May inhibit the degradation of mRNAs involved in stress adaptation. The chain is Ribonuclease TUDOR 1 from Arabidopsis thaliana (Mouse-ear cress).